Here is a 120-residue protein sequence, read N- to C-terminus: Response regulator receiver protein CpdR (120 aa).

In terms of domain architecture, Response regulatory spans Arg3–Leu117. A 4-aspartylphosphate modification is found at Asp52.

In terms of processing, is phosphorylated by ChpT-P on Asp-52.

It is found in the cytoplasm. In terms of biological role, component of a regulatory phosphorelay system that controls B.abortus cell growth, division, and intracellular survival inside mammalian host cells. This signaling pathway is composed of CckA, ChpT, CtrA and CpdR. CpdR is a response regulator substrate of ChpT. Unphosphorylated CpdR controls steady-state levels of CtrA in the B.abortus cell, likely via CtrA destabilization and activation of its proteolysis. In Brucella abortus (strain 2308), this protein is Response regulator receiver protein CpdR.